Reading from the N-terminus, the 124-residue chain is Aspartate 1-decarboxylase (124 aa).

The active-site Schiff-base intermediate with substrate; via pyruvic acid is the Ser-21. Ser-21 bears the Pyruvic acid (Ser) mark. Thr-53 contacts substrate. Catalysis depends on Tyr-54, which acts as the Proton donor. Substrate is bound at residue 69 to 71 (GAA).

It belongs to the PanD family. Heterooctamer of four alpha and four beta subunits. It depends on pyruvate as a cofactor. In terms of processing, is synthesized initially as an inactive proenzyme, which is activated by self-cleavage at a specific serine bond to produce a beta-subunit with a hydroxyl group at its C-terminus and an alpha-subunit with a pyruvoyl group at its N-terminus.

The protein resides in the cytoplasm. It carries out the reaction L-aspartate + H(+) = beta-alanine + CO2. The protein operates within cofactor biosynthesis; (R)-pantothenate biosynthesis; beta-alanine from L-aspartate: step 1/1. Catalyzes the pyruvoyl-dependent decarboxylation of aspartate to produce beta-alanine. The polypeptide is Aspartate 1-decarboxylase (Dehalococcoides mccartyi (strain ATCC BAA-2266 / KCTC 15142 / 195) (Dehalococcoides ethenogenes (strain 195))).